The chain runs to 185 residues: Peptidyl-tRNA hydrolase (185 aa).

Tyr-14 is a binding site for tRNA. The active-site Proton acceptor is His-19. The tRNA site is built by Tyr-65, Asn-67, and Asn-113.

The protein belongs to the PTH family. In terms of assembly, monomer.

Its subcellular location is the cytoplasm. The catalysed reaction is an N-acyl-L-alpha-aminoacyl-tRNA + H2O = an N-acyl-L-amino acid + a tRNA + H(+). Hydrolyzes ribosome-free peptidyl-tRNAs (with 1 or more amino acids incorporated), which drop off the ribosome during protein synthesis, or as a result of ribosome stalling. Its function is as follows. Catalyzes the release of premature peptidyl moieties from peptidyl-tRNA molecules trapped in stalled 50S ribosomal subunits, and thus maintains levels of free tRNAs and 50S ribosomes. The chain is Peptidyl-tRNA hydrolase from Rickettsia rickettsii (strain Iowa).